The sequence spans 170 residues: Class I hydrophobin E (170 aa).

The signal sequence occupies residues 1-19 (MQLTTLLTGLISVLSVTTA). Intrachain disulfides connect Cys-62–Cys-126, Cys-70–Cys-117, Cys-71–Cys-105, and Cys-127–Cys-139.

The protein belongs to the fungal hydrophobin family.

It localises to the secreted. Its subcellular location is the cell wall. Functionally, aerial growth, conidiation, and dispersal of filamentous fungi in the environment rely upon a capability of their secreting small amphipathic proteins called hydrophobins (HPBs) with low sequence identity. Class I can self-assemble into an outermost layer of rodlet bundles on aerial cell surfaces, conferring cellular hydrophobicity that supports fungal growth, development and dispersal; whereas Class II form highly ordered films at water-air interfaces through intermolecular interactions but contribute nothing to the rodlet structure. In P.expansum, hydrophobins contribute to germination, tolerance to cold stress and mycotoxins patulin and citrinin production. In Penicillium expansum (Blue mold rot fungus), this protein is Class I hydrophobin E.